A 700-amino-acid polypeptide reads, in one-letter code: Calpain-2 catalytic subunit (700 aa).

An N-acetylalanine modification is found at A2. Positions 2–19 (AGIAAKLAKDREAAEGLG) are cleaved as a propeptide — anchors to the small subunit. One can recognise a Calpain catalytic domain in the interval 45 to 344 (LFQDPSFPAI…YSRLEICNLT (300 aa)). Residues I89, G91, and D96 each coordinate Ca(2+). The active site involves C105. Ca(2+) is bound by residues E175, Q229, and K230. Active-site residues include H262 and N286. Residues E292, D299, and E323 each coordinate Ca(2+). A domain III region spans residues 345–514 (PDTLTSDTYK…KKADYQAVDD (170 aa)). The tract at residues 515–529 (EIEANLEEFDISEDD) is linker. The segment at 530 to 700 (IDDGFRRLFA…LISWLCFSVL (171 aa)) is domain IV. Residues A542, D545, E547, E552, D585, D587, S589, K591, E596, D615, D617, S619, T621, E626, D658, and N661 each contribute to the Ca(2+) site. EF-hand domains are found at residues 572-605 (FSIE…TKIQ) and 602-637 (TKIQ…AGFK). Positions 667 to 700 (VRLETLFKIFKQLDPENTGTIELDLISWLCFSVL) constitute an EF-hand 3 domain.

It belongs to the peptidase C2 family. As to quaternary structure, forms a heterodimer with a small (regulatory) subunit (CAPNS1). Interacts with CPEB3; this leads to cleavage of CPEB3. Interacts with PIDD1 alternative open reading frame protein altPIDD1. Ca(2+) serves as cofactor. As to expression, ubiquitous.

The protein resides in the cytoplasm. It is found in the cell membrane. It catalyses the reaction Broad endopeptidase specificity.. Its activity is regulated as follows. Activated by 200-1000 micromolar concentrations of calcium and inhibited by calpastatin. Functionally, calcium-regulated non-lysosomal thiol-protease which catalyzes limited proteolysis of substrates involved in cytoskeletal remodeling and signal transduction. Proteolytically cleaves MYOC at 'Arg-226'. Proteolytically cleaves CPEB3 following neuronal stimulation which abolishes CPEB3 translational repressor activity, leading to translation of CPEB3 target mRNAs. The chain is Calpain-2 catalytic subunit (CAPN2) from Homo sapiens (Human).